The sequence spans 264 residues: Ribosomal protein L11 methyltransferase (264 aa).

Positions 116, 137, 159, and 200 each coordinate S-adenosyl-L-methionine.

It belongs to the methyltransferase superfamily. PrmA family.

It localises to the cytoplasm. It catalyses the reaction L-lysyl-[protein] + 3 S-adenosyl-L-methionine = N(6),N(6),N(6)-trimethyl-L-lysyl-[protein] + 3 S-adenosyl-L-homocysteine + 3 H(+). In terms of biological role, methylates ribosomal protein L11. The sequence is that of Ribosomal protein L11 methyltransferase from Thermotoga maritima (strain ATCC 43589 / DSM 3109 / JCM 10099 / NBRC 100826 / MSB8).